Consider the following 198-residue polypeptide: Superoxide dismutase [Fe] (198 aa).

Residues His-27, His-74, Asp-158, and His-162 each contribute to the Fe cation site.

The protein belongs to the iron/manganese superoxide dismutase family. As to quaternary structure, homodimer. It depends on Fe cation as a cofactor.

Its subcellular location is the cytoplasm. The enzyme catalyses 2 superoxide + 2 H(+) = H2O2 + O2. Functionally, destroys superoxide anion radicals which are normally produced within the cells and which are toxic to biological systems. This is Superoxide dismutase [Fe] (SODB) from Plasmodium falciparum (isolate HB3).